The chain runs to 768 residues: Probable dipeptidyl peptidase 4 (768 aa).

The signal sequence occupies residues 1–17 (MKLGKWSVLLLVGCTAA). Residues Asn38, Asn81, Asn104, Asn113, Asn221, Asn282, and Asn468 are each glycosylated (N-linked (GlcNAc...) asparagine). The active-site Charge relay system is the Ser616. A glycan (N-linked (GlcNAc...) asparagine) is linked at Asn668. Residues Asp693 and His728 each act as charge relay system in the active site.

Belongs to the peptidase S9B family.

Its subcellular location is the secreted. It catalyses the reaction Release of an N-terminal dipeptide, Xaa-Yaa-|-Zaa-, from a polypeptide, preferentially when Yaa is Pro, provided Zaa is neither Pro nor hydroxyproline.. In terms of biological role, extracellular dipeptidyl-peptidase which removes N-terminal dipeptides sequentially from polypeptides having unsubstituted N-termini provided that the penultimate residue is proline. This Aspergillus clavatus (strain ATCC 1007 / CBS 513.65 / DSM 816 / NCTC 3887 / NRRL 1 / QM 1276 / 107) protein is Probable dipeptidyl peptidase 4 (dpp4).